Here is a 952-residue protein sequence, read N- to C-terminus: Isoleucine--tRNA ligase (952 aa).

The short motif at 58–68 is the 'HIGH' region element; that stretch reads PYANGDIHIGH. L-isoleucyl-5'-AMP is bound at residue Glu576. The 'KMSKS' region motif lies at 617–621; sequence KMSKS. Lys620 serves as a coordination point for ATP. The Zn(2+) site is built by Cys915, Cys918, Cys935, and Cys938.

The protein belongs to the class-I aminoacyl-tRNA synthetase family. IleS type 1 subfamily. Monomer. It depends on Zn(2+) as a cofactor.

Its subcellular location is the cytoplasm. It catalyses the reaction tRNA(Ile) + L-isoleucine + ATP = L-isoleucyl-tRNA(Ile) + AMP + diphosphate. Catalyzes the attachment of isoleucine to tRNA(Ile). As IleRS can inadvertently accommodate and process structurally similar amino acids such as valine, to avoid such errors it has two additional distinct tRNA(Ile)-dependent editing activities. One activity is designated as 'pretransfer' editing and involves the hydrolysis of activated Val-AMP. The other activity is designated 'posttransfer' editing and involves deacylation of mischarged Val-tRNA(Ile). The sequence is that of Isoleucine--tRNA ligase from Aliivibrio fischeri (strain ATCC 700601 / ES114) (Vibrio fischeri).